A 364-amino-acid chain; its full sequence is tRNA 2-selenouridine synthase (364 aa).

A Rhodanese domain is found at 14 to 137 (LIADTPIIDV…LRQTAIQATI (124 aa)). The active-site S-selanylcysteine intermediate is the cysteine 97.

This sequence belongs to the SelU family. Monomer.

The enzyme catalyses 5-methylaminomethyl-2-thiouridine(34) in tRNA + selenophosphate + (2E)-geranyl diphosphate + H2O + H(+) = 5-methylaminomethyl-2-selenouridine(34) in tRNA + (2E)-thiogeraniol + phosphate + diphosphate. The catalysed reaction is 5-methylaminomethyl-2-thiouridine(34) in tRNA + (2E)-geranyl diphosphate = 5-methylaminomethyl-S-(2E)-geranyl-thiouridine(34) in tRNA + diphosphate. It catalyses the reaction 5-methylaminomethyl-S-(2E)-geranyl-thiouridine(34) in tRNA + selenophosphate + H(+) = 5-methylaminomethyl-2-(Se-phospho)selenouridine(34) in tRNA + (2E)-thiogeraniol. It carries out the reaction 5-methylaminomethyl-2-(Se-phospho)selenouridine(34) in tRNA + H2O = 5-methylaminomethyl-2-selenouridine(34) in tRNA + phosphate. Involved in the post-transcriptional modification of the uridine at the wobble position (U34) of tRNA(Lys), tRNA(Glu) and tRNA(Gln). Catalyzes the conversion of 2-thiouridine (S2U-RNA) to 2-selenouridine (Se2U-RNA). Acts in a two-step process involving geranylation of 2-thiouridine (S2U) to S-geranyl-2-thiouridine (geS2U) and subsequent selenation of the latter derivative to 2-selenouridine (Se2U) in the tRNA chain. The polypeptide is tRNA 2-selenouridine synthase (Escherichia coli O127:H6 (strain E2348/69 / EPEC)).